The primary structure comprises 274 residues: Prothoracicostatic peptide (274 aa).

Positions 1–19 (MRWCLFALWVFGVATVVTA) are cleaved as a signal peptide. The propeptide occupies 20 to 67 (AEEPHHDAAPQTDNEVDLTEDDKRAWSSLHSGWAKRAWQDMSSAWGKR). A Tryptophan amide modification is found at tryptophan 76. The propeptide occupies 77 to 91 (GKRGWQDLNSAWGKR). Tryptophan 100 is subject to Tryptophan amide. The propeptide occupies 101 to 136 (GKRGWQDLNSAWGKRDDDEAMEKKSWQDLNSVWGKR). Residue tryptophan 145 is modified to Tryptophan amide. The propeptide occupies 146 to 148 (GKR). Tryptophan 157 bears the Tryptophan amide mark. Positions 158–172 (GKRGWNDISSVWGKR) are excised as a propeptide. Position 181 is a tryptophan amide (tryptophan 181). Positions 182 to 274 (GKRAWQDMSS…NEHSATTNEA (93 aa)) are excised as a propeptide.

The protein resides in the secreted. In terms of biological role, inhibits ecdysteroid biosynthesis in the prothoracic gland of fifth instar larvae, with maximum inhibition during the spinning stage. When administered to day 8 fifth instar larvae it produces a significant delay in the commencement spinning behavior. In Bombyx mori (Silk moth), this protein is Prothoracicostatic peptide.